The sequence spans 575 residues: Stage VI sporulation protein D (575 aa).

Residues 159–502 are disordered; the sequence is EELSEPPAHS…ETKEPQTKES (344 aa). Positions 200-212 are enriched in basic and acidic residues; the sequence is GLREELETEKAES. Acidic residues-rich tracts occupy residues 229-238 and 249-264; these read KEEEESEELA and ETEE…EIEI. 3 stretches are compositionally biased toward basic and acidic residues: residues 266–275, 283–302, and 310–325; these read EIVKAKKETA, DVRE…HVGA, and AELH…KEET. Residues 438 to 448 are compositionally biased toward acidic residues; the sequence is EEEEQEEESFE. The span at 449–464 shows a compositional bias: basic and acidic residues; it reads IEVRKTPSAEEPKEET. Residues 465-474 are compositionally biased toward polar residues; sequence PFQSFQLPES. Positions 493–502 are enriched in basic and acidic residues; sequence ETKEPQTKES. Residues 523–567 enclose the LysM domain; the sequence is KICIVQQEDTIERLCERYEITSQQLIRMNSLALDDELKAGQILYI.

Its function is as follows. Required for assembly of a normal spore coat. May be a component of the innermost layer of the spore coat that aids in its adherence to the prespore. The sequence is that of Stage VI sporulation protein D (spoVID) from Bacillus subtilis (strain 168).